The following is a 144-amino-acid chain: Large ribosomal subunit protein uL15 (144 aa).

The span at 1–16 (MVVRKEKKSRKYRGYR) shows a compositional bias: basic residues. The segment at 1–35 (MVVRKEKKSRKYRGYRTHGWGTKGQHRDRGAQGGR) is disordered.

Belongs to the universal ribosomal protein uL15 family. Part of the 50S ribosomal subunit.

Binds to the 23S rRNA. This is Large ribosomal subunit protein uL15 from Sulfolobus acidocaldarius (strain ATCC 33909 / DSM 639 / JCM 8929 / NBRC 15157 / NCIMB 11770).